Consider the following 62-residue polypeptide: Large ribosomal subunit protein bL28 (62 aa).

Residues 1-26 (MARKCYVTGKSPKSGNNRSHALNKTK) form a disordered region. A compositionally biased stretch (polar residues) spans 11–20 (SPKSGNNRSH).

It belongs to the bacterial ribosomal protein bL28 family.

The polypeptide is Large ribosomal subunit protein bL28 (Exiguobacterium sp. (strain ATCC BAA-1283 / AT1b)).